A 148-amino-acid polypeptide reads, in one-letter code: Large ribosomal subunit protein bL9 (148 aa).

Belongs to the bacterial ribosomal protein bL9 family.

In terms of biological role, binds to the 23S rRNA. This chain is Large ribosomal subunit protein bL9, found in Bifidobacterium longum (strain DJO10A).